A 675-amino-acid chain; its full sequence is Heat shock 70 kDa protein 12A (675 aa).

The span at 1 to 13 (MADKEAGGSDGPR) shows a compositional bias: basic and acidic residues. The segment at 1-45 (MADKEAGGSDGPRETAPTSAYSSPARSLGDTGITPLSPSHIVNDT) is disordered. The residue at position 2 (Ala2) is an N-acetylalanine. Polar residues-rich tracts occupy residues 16–25 (APTSAYSSPA) and 34–45 (TPLSPSHIVNDT).

It belongs to the heat shock protein 70 family. In terms of assembly, interacts with SORL1 (via cytosolic C-terminus); this interaction affects SORL1 internalization and subcellular localization. As to expression, widely expressed with highest levels in brain, kidney and muscle.

The protein localises to the cytoplasm. It localises to the nucleus. Its function is as follows. Adapter protein for SORL1, but not SORT1. Delays SORL1 internalization and affects SORL1 subcellular localization. In Homo sapiens (Human), this protein is Heat shock 70 kDa protein 12A (HSPA12A).